A 102-amino-acid chain; its full sequence is Acid shock protein (102 aa).

Residues 1–21 (MKKVLALVVAAAMGLSSAAFA) form the signal peptide. Residues 22-41 (AETATTPAPTATTTKAAPAK) are compositionally biased toward low complexity. The propeptide occupies 22-58 (AETATTPAPTATTTKAAPAKTTHHKKQHKAAPAQKAQ). Positions 22–102 (AETATTPAPT…PAKPAAQPAA (81 aa)) are disordered. Positions 80 to 90 (AAKKHAGKHSH) are enriched in basic residues. The segment covering 91–102 (QQPAKPAAQPAA) has biased composition (low complexity).

The protein belongs to the Asr family. Post-translationally, proteolytic processing gives rise to the active protein.

Its subcellular location is the periplasm. Its function is as follows. Required for growth and/or survival at acidic conditions. This is Acid shock protein from Escherichia coli (strain 55989 / EAEC).